Reading from the N-terminus, the 298-residue chain is Sulfate adenylyltransferase subunit 2 (298 aa).

2 stretches are compositionally biased toward basic and acidic residues: residues 272–282 (RTSERQGRLID) and 289–298 (MEKKKQEGYF). The tract at residues 272–298 (RTSERQGRLIDSDSAGSMEKKKQEGYF) is disordered.

Belongs to the PAPS reductase family. CysD subfamily. As to quaternary structure, heterodimer composed of CysD, the smaller subunit, and CysN.

The catalysed reaction is sulfate + ATP + H(+) = adenosine 5'-phosphosulfate + diphosphate. It participates in sulfur metabolism; hydrogen sulfide biosynthesis; sulfite from sulfate: step 1/3. With CysN forms the ATP sulfurylase (ATPS) that catalyzes the adenylation of sulfate producing adenosine 5'-phosphosulfate (APS) and diphosphate, the first enzymatic step in sulfur assimilation pathway. APS synthesis involves the formation of a high-energy phosphoric-sulfuric acid anhydride bond driven by GTP hydrolysis by CysN coupled to ATP hydrolysis by CysD. The polypeptide is Sulfate adenylyltransferase subunit 2 (Burkholderia lata (strain ATCC 17760 / DSM 23089 / LMG 22485 / NCIMB 9086 / R18194 / 383)).